The chain runs to 1354 residues: Ubiquitin carboxyl-terminal hydrolase 47 (1354 aa).

A compositionally biased stretch (polar residues) spans Glu114–Asp133. The disordered stretch occupies residues Glu114–Phe139. The USP domain occupies Val174 to Lys549. Cys183 (nucleophile) is an active-site residue. Positions Asp408–Asn438 are disordered. The span at Gln416–Asn438 shows a compositional bias: polar residues. The active-site Proton acceptor is the His488. The segment covering Leu863 to Gly882 has biased composition (polar residues). Disordered regions lie at residues Leu863–Lys1004 and Leu1314–Lys1335. Over residues Pro920–Asn930 the composition is skewed to basic and acidic residues. Positions Ser933–Asp949 are enriched in low complexity. Basic and acidic residues predominate over residues Lys977–Trp986. Positions Asp987–Asp1000 are enriched in acidic residues.

It belongs to the peptidase C19 family. USP47 subfamily.

Its subcellular location is the cytoplasm. The enzyme catalyses Thiol-dependent hydrolysis of ester, thioester, amide, peptide and isopeptide bonds formed by the C-terminal Gly of ubiquitin (a 76-residue protein attached to proteins as an intracellular targeting signal).. Ubiquitin-specific protease that specifically deubiquitinates monoubiquitinated DNA polymerase beta (polb), stabilizing polb thereby playing a role in base-excision repair (BER). The protein is Ubiquitin carboxyl-terminal hydrolase 47 (usp47) of Xenopus tropicalis (Western clawed frog).